The sequence spans 224 residues: Cytosolic-abundant heat soluble protein 77580 (224 aa).

The segment covering 1 to 13 has biased composition (low complexity); it reads MSNYQQESSYQYS. The segment at 1–38 is disordered; it reads MSNYQQESSYQYSDRSNNGQQQEQQEKKEVEHSSYTHT. Residues 24 to 38 are compositionally biased toward basic and acidic residues; that stretch reads QQEKKEVEHSSYTHT. Residues 83 to 191 are a coiled coil; that stretch reads VIDTEAETEE…KRVLERSKFH (109 aa). 2 CAHS motif regions span residues 122–140 and 159–177; these read YRKQQEVETEKIRKELEKQ and QKRQIDLEARYAKKELERE. The span at 200 to 215 shows a compositional bias: low complexity; sequence AAAGSTHSGSSSVAVS. Residues 200–224 are disordered; that stretch reads AAAGSTHSGSSSVAVSESEKFQTNN.

The protein belongs to the Cytosolic-abundant heat soluble protein (CAHS) family.

It is found in the cytoplasm. CAHS proteins are cytosolic heat soluble proteins that seem to contribute to the anhydrobiosis in tardigrades, but their specific mechanisms are yet to be identified. It is possible that protection during anhydrobiosis might occur via the stabilization of vitrifying small molecules such as sugars, but not via the direct glass transition of CAHS proteins themselves. This chain is Cytosolic-abundant heat soluble protein 77580, found in Hypsibius exemplaris (Freshwater tardigrade).